The following is a 383-amino-acid chain: Pheromone-regulated membrane protein 10 (383 aa).

Residues 1–65 (MIVSFGDATT…ILADTNLYPP (65 aa)) are Cytoplasmic-facing. Residues 66–86 (WMCVLLYAFCSAMVTPYAFGG) traverse the membrane as a helical segment. D87 is a topological domain (extracellular). A helical membrane pass occupies residues 88 to 108 (WVNLAISFFMGLCVGSLQFIL). At 109–117 (SQKSYMYSN) the chain is on the cytoplasmic side. Residues 118 to 138 (VFEISASIVVSFCGRAFGSIP) traverse the membrane as a helical segment. Residues 139–141 (RSH) are Extracellular-facing. Residues 142 to 162 (ICFGAVTQGSLALILPGYIIL) form a helical membrane-spanning segment. The Cytoplasmic portion of the chain corresponds to 163 to 180 (CGALELQSRSLVAGAVRM). Residues 181–201 (FYAIIYSLFLGFGITLGSALF) traverse the membrane as a helical segment. Residues 202–216 (GWMYHNATNEISCPQ) lie on the Extracellular side of the membrane. A helical membrane pass occupies residues 217 to 237 (LISPWFRFLFVPAFTISISLL). Topologically, residues 238 to 241 (NQAH) are cytoplasmic. A helical transmembrane segment spans residues 242–262 (ISQLPVMVFISCTGYVVTYWA). Residues 263–271 (GKHFANSTE) lie on the Extracellular side of the membrane. The chain crosses the membrane as a helical span at residues 272–292 (FTAALAAFVIGVLGNLYSRIW). Position 293 (K293) is a topological domain, cytoplasmic. Residues 294 to 314 (GLAVSAMLPAIFVQVPSGIAS) traverse the membrane as a helical segment. Residues 315–352 (QNSLLSGLQSANTIVNANETITTSTSDPSSSMSFGMTM) lie on the Extracellular side of the membrane. A helical transmembrane segment spans residues 353 to 373 (IQVCVGISVGLFASSLFVYPF). At 374–383 (GKKKTGLFSL) the chain is on the cytoplasmic side.

It belongs to the ThrE exporter (TC 2.A.79) family.

It localises to the membrane. The sequence is that of Pheromone-regulated membrane protein 10 (PRM10) from Saccharomyces cerevisiae (strain ATCC 204508 / S288c) (Baker's yeast).